Consider the following 239-residue polypeptide: Small ribosomal subunit protein uS2 (239 aa).

The protein belongs to the universal ribosomal protein uS2 family.

This chain is Small ribosomal subunit protein uS2, found in Francisella tularensis subsp. novicida (strain U112).